The following is a 930-amino-acid chain: Xanthan lyase (930 aa).

Positions 1-25 (MLSGILIAALLMTLWGGWQPDIAHA) are cleaved as a signal peptide. Xanthan is bound by residues 146–148 (NWW), histidine 246, tyrosine 255, arginine 309, 313–315 (RSY), and asparagine 424. Catalysis depends on tyrosine 255, which acts as the Proton donor/acceptor. Ca(2+)-binding residues include aspartate 515, aspartate 516, and glutamate 517. Arginine 612 lines the xanthan pocket. A Ca(2+)-binding site is contributed by glutamate 676.

It belongs to the polysaccharide lyase 8 family. In terms of assembly, monomer.

Its subcellular location is the secreted. The enzyme catalyses Eliminative cleavage of the terminal beta-D-mannosyl-(1-&gt;4)-beta-D-glucuronosyl linkage of the side-chain of the polysaccharide xanthan, leaving a 4-deoxy-alpha-L-threo-hex-4-enuronosyl group at the terminus of the side-chain.. Activated by Co(2+) at 1 mM. Completely inhibited by Hg(2+) but not affected by other divalent cations. Intensely inhibited by NaCl and KCl at 150 mM, in particular by the Na(+) and K(+) ions but not the Cl(-) ions. Partially inhibited by iodoacetamide and N-ethylmaleimide at 1 mM but not by dithiothreitol, reduced glutathione or 2-mercaptoethanol. Its function is as follows. Plays a role in xanthan depolymerization pathway by cleaving the linkage between the terminal mannosyl and glucuronyl residues of the side chain of xanthan to liberate pyruvylated mannose. Is highly specific for pyruvylated side-chains of xanthan and is not effective with hyaluronate, chondroitin A, gellan, heparin or pectin. This chain is Xanthan lyase, found in Bacillus sp. (strain GL1).